The following is a 306-amino-acid chain: Ornithine carbamoyltransferase (306 aa).

Carbamoyl phosphate is bound by residues 53–56, Gln-80, Arg-104, and 131–134; these read STRT and HPCQ. Residues Asn-162, Asp-219, and 223-224 contribute to the L-ornithine site; that span reads SM. Carbamoyl phosphate contacts are provided by residues 259–260 and Arg-287; that span reads CL.

It belongs to the aspartate/ornithine carbamoyltransferase superfamily. OTCase family.

The protein resides in the cytoplasm. It catalyses the reaction carbamoyl phosphate + L-ornithine = L-citrulline + phosphate + H(+). It functions in the pathway amino-acid biosynthesis; L-arginine biosynthesis; L-arginine from L-ornithine and carbamoyl phosphate: step 1/3. Reversibly catalyzes the transfer of the carbamoyl group from carbamoyl phosphate (CP) to the N(epsilon) atom of ornithine (ORN) to produce L-citrulline. The polypeptide is Ornithine carbamoyltransferase (Acinetobacter baumannii (strain ATCC 17978 / DSM 105126 / CIP 53.77 / LMG 1025 / NCDC KC755 / 5377)).